The sequence spans 395 residues: Phosphoglycerate kinase (395 aa).

Substrate contacts are provided by residues 21–23 (DLN), Arg36, 59–62 (HLGR), Arg114, and Arg147. ATP is bound by residues Lys198, Glu320, and 346–349 (GGDT).

Belongs to the phosphoglycerate kinase family. Monomer.

The protein resides in the cytoplasm. It carries out the reaction (2R)-3-phosphoglycerate + ATP = (2R)-3-phospho-glyceroyl phosphate + ADP. The protein operates within carbohydrate degradation; glycolysis; pyruvate from D-glyceraldehyde 3-phosphate: step 2/5. This Nitrosospira multiformis (strain ATCC 25196 / NCIMB 11849 / C 71) protein is Phosphoglycerate kinase.